The following is a 448-amino-acid chain: Probable glycine dehydrogenase (decarboxylating) subunit 1 (448 aa).

It belongs to the GcvP family. N-terminal subunit subfamily. The glycine cleavage system is composed of four proteins: P, T, L and H. In this organism, the P 'protein' is a heterodimer of two subunits.

The enzyme catalyses N(6)-[(R)-lipoyl]-L-lysyl-[glycine-cleavage complex H protein] + glycine + H(+) = N(6)-[(R)-S(8)-aminomethyldihydrolipoyl]-L-lysyl-[glycine-cleavage complex H protein] + CO2. Functionally, the glycine cleavage system catalyzes the degradation of glycine. The P protein binds the alpha-amino group of glycine through its pyridoxal phosphate cofactor; CO(2) is released and the remaining methylamine moiety is then transferred to the lipoamide cofactor of the H protein. The protein is Probable glycine dehydrogenase (decarboxylating) subunit 1 of Anoxybacillus flavithermus (strain DSM 21510 / WK1).